We begin with the raw amino-acid sequence, 899 residues long: Protein translocase subunit SecA (899 aa).

ATP is bound by residues Gln-87, 105 to 109, and Asp-516; that span reads GEGKT. Positions 884, 886, 895, and 896 each coordinate Zn(2+).

The protein belongs to the SecA family. In terms of assembly, monomer and homodimer. Part of the essential Sec protein translocation apparatus which comprises SecA, SecYEG and auxiliary proteins SecDF. Other proteins may also be involved. Zn(2+) is required as a cofactor.

The protein resides in the cell inner membrane. The protein localises to the cytoplasm. The enzyme catalyses ATP + H2O + cellular proteinSide 1 = ADP + phosphate + cellular proteinSide 2.. In terms of biological role, part of the Sec protein translocase complex. Interacts with the SecYEG preprotein conducting channel. Has a central role in coupling the hydrolysis of ATP to the transfer of proteins into and across the cell membrane, serving as an ATP-driven molecular motor driving the stepwise translocation of polypeptide chains across the membrane. The protein is Protein translocase subunit SecA of Borreliella burgdorferi (strain ZS7) (Borrelia burgdorferi).